A 67-amino-acid chain; its full sequence is Mitotic-spindle organizing protein 1A (67 aa).

It belongs to the MOZART1 family. Part of the gamma-tubulin complex. Interacts with GIP1 and GCP3. In terms of tissue distribution, mostly expressed in siliques and flowers, and, to a lower extent, in leaves, roots and seedlings, with highest levels in young tissues, meristematic cells, and the vasculature.

The protein localises to the cytoplasm. The protein resides in the cytoskeleton. Its subcellular location is the microtubule organizing center. It localises to the spindle. It is found in the nucleus. The protein localises to the phragmoplast. The protein resides in the nucleus envelope. Required for gamma-tubulin complex recruitment to the microtubule organizing centers (MTOCs). During mitosis, modulates gamma-tubulin complex localization, spindle stability and chromosomal segregation. Necessary for gametophyte development and embryogenesis. In Arabidopsis thaliana (Mouse-ear cress), this protein is Mitotic-spindle organizing protein 1A (GIP2).